We begin with the raw amino-acid sequence, 182 residues long: Ribosome maturation factor RimM (182 aa).

Residues 102 to 182 (EEGDYYWKDL…TIEVDWDPGF (81 aa)) enclose the PRC barrel domain.

This sequence belongs to the RimM family. In terms of assembly, binds ribosomal protein uS19.

Its subcellular location is the cytoplasm. Functionally, an accessory protein needed during the final step in the assembly of 30S ribosomal subunit, possibly for assembly of the head region. Essential for efficient processing of 16S rRNA. May be needed both before and after RbfA during the maturation of 16S rRNA. It has affinity for free ribosomal 30S subunits but not for 70S ribosomes. This Salmonella gallinarum (strain 287/91 / NCTC 13346) protein is Ribosome maturation factor RimM.